The sequence spans 376 residues: MTSDVLQLTCDLIARASVTPADAGCQALIADRLSAAGFACEHLRLGAVDNLWATHGSGAPVLVLLGHTDVVPPGPASDWASDPFAPQVRDGVLYGRGAADMKGSVAAFVVAAEQFVAAHPEHPGTLAVLLTSDEEGDAIDGVRHVARLFAERGQQIDWCITGEPSSTERLGDLLRVGRRGSLSGNLIVKGVQGHVAYPHKARNPIHLAAPALAELIARQWDDGFESFPPTSLQISNIHAGTGANNVIPGELQVAFNLRYTPHWNAETLEREIVALLERHALTYTLAWHRSGEPFYTPEGTLRRVAREVLGAFAGAPPEESTGGGTSDARFIAPLGAQCIEVGPVNASIHQVDEHVRVADLEALPALYRTLVERLLV.

H67 is a binding site for Zn(2+). Residue D69 is part of the active site. D100 contributes to the Zn(2+) binding site. E134 (proton acceptor) is an active-site residue. The Zn(2+) site is built by E135, E163, and H349.

It belongs to the peptidase M20A family. DapE subfamily. As to quaternary structure, homodimer. The cofactor is Zn(2+). Co(2+) is required as a cofactor.

The enzyme catalyses N-succinyl-(2S,6S)-2,6-diaminopimelate + H2O = (2S,6S)-2,6-diaminopimelate + succinate. The protein operates within amino-acid biosynthesis; L-lysine biosynthesis via DAP pathway; LL-2,6-diaminopimelate from (S)-tetrahydrodipicolinate (succinylase route): step 3/3. Functionally, catalyzes the hydrolysis of N-succinyl-L,L-diaminopimelic acid (SDAP), forming succinate and LL-2,6-diaminopimelate (DAP), an intermediate involved in the bacterial biosynthesis of lysine and meso-diaminopimelic acid, an essential component of bacterial cell walls. The protein is Succinyl-diaminopimelate desuccinylase of Xanthomonas campestris pv. campestris (strain B100).